The sequence spans 586 residues: MRKHPQTATKHLFVSGGVASSLGKGLTASSLGQLLTVRGLHVTMQKLDPYLNVDPGTMNPFQHGEVFVTEDGAETDLDVGHYERFLDRNLPGSANVTTGQVYSTVIAKERRGEYLGDTVQVIPHITDEIKRRILAMAQPDADGNRPDVVITEIGGTVGDIESQPFLEAARQVRHYLGREDVFFLHVSLVPYLAPSGELKTKPTQHSVAALRSIGITPDALILRCDRDVPEALKNKIALMCDVDIDGVISTPDAPSIYDIPKVLHREELDAFVVRRLNLPFRDVDWTEWDDLVRRVHEPHETVRIALVGKYVELSDAYLSVAEALRAGGFKHRAKVEICWVASDGCETTSGAAAALGDVHGVLIPGGFGIRGIEGKIGAIAYARARGLPVLGLCLGLQCIVIEAARSVGLTNANSAEFDPDTPDPVIATMPDQEEIVAGEADLGGTMRLGSYPAVLEPDSVVAQAYQTTQVSERHRHRYEVNNAYRDKIAESGLRFSGTSPDGHLVEFVEYPPDRHPFVVGTQAHPELKSRPTRPHPLFVAFVGAAIDYKAGELLPVEIPEIPEHTPNGSSHRDGVGQPLPEPASRG.

Residues 1–278 (MRKHPQTATK…DAFVVRRLNL (278 aa)) form an amidoligase domain region. Ser20 contributes to the CTP binding site. Residue Ser20 coordinates UTP. ATP-binding positions include 21–26 (SLGKGL) and Asp78. Residues Asp78 and Glu152 each contribute to the Mg(2+) site. Residues 159–161 (DIE), 199–204 (KTKPTQ), and Lys235 contribute to the CTP site. UTP is bound by residues 199–204 (KTKPTQ) and Lys235. The Glutamine amidotransferase type-1 domain occupies 303–551 (RIALVGKYVE…VGAAIDYKAG (249 aa)). Residue Gly366 participates in L-glutamine binding. The active-site Nucleophile; for glutamine hydrolysis is the Cys393. L-glutamine-binding positions include 394-397 (LGLQ), Glu416, and Arg477. Residues His524 and Glu526 contribute to the active site. Positions 560 to 586 (EIPEHTPNGSSHRDGVGQPLPEPASRG) are disordered.

This sequence belongs to the CTP synthase family. Homotetramer.

The enzyme catalyses UTP + L-glutamine + ATP + H2O = CTP + L-glutamate + ADP + phosphate + 2 H(+). It carries out the reaction L-glutamine + H2O = L-glutamate + NH4(+). The catalysed reaction is UTP + NH4(+) + ATP = CTP + ADP + phosphate + 2 H(+). Its pathway is pyrimidine metabolism; CTP biosynthesis via de novo pathway; CTP from UDP: step 2/2. Its activity is regulated as follows. Allosterically activated by GTP, when glutamine is the substrate; GTP has no effect on the reaction when ammonia is the substrate. The allosteric effector GTP functions by stabilizing the protein conformation that binds the tetrahedral intermediate(s) formed during glutamine hydrolysis. Inhibited by the product CTP, via allosteric rather than competitive inhibition. In terms of biological role, catalyzes the ATP-dependent amination of UTP to CTP with either L-glutamine or ammonia as the source of nitrogen. Regulates intracellular CTP levels through interactions with the four ribonucleotide triphosphates. The protein is CTP synthase of Mycobacterium tuberculosis (strain CDC 1551 / Oshkosh).